Consider the following 22-residue polypeptide: Proline-rich peptide (22 aa).

A disordered region spans residues 1 to 22; the sequence is FVDRNRIPRSNNGPKIPIISNP.

It localises to the secreted. Antibacterial peptide active against Gram-positive bacterium M.luteus and Gram-negative bacterium E.coli. This Calliphora vicina (Blue blowfly) protein is Proline-rich peptide.